A 124-amino-acid polypeptide reads, in one-letter code: Small ribosomal subunit protein uS13 (124 aa).

Positions 91–124 are disordered; the sequence is HRKGLPVNGQNTRNNARTRKGKPKAVTGKKQAGK.

Belongs to the universal ribosomal protein uS13 family. As to quaternary structure, part of the 30S ribosomal subunit. Forms a loose heterodimer with protein S19. Forms two bridges to the 50S subunit in the 70S ribosome.

Functionally, located at the top of the head of the 30S subunit, it contacts several helices of the 16S rRNA. In the 70S ribosome it contacts the 23S rRNA (bridge B1a) and protein L5 of the 50S subunit (bridge B1b), connecting the 2 subunits; these bridges are implicated in subunit movement. Contacts the tRNAs in the A and P-sites. In Acholeplasma laidlawii (strain PG-8A), this protein is Small ribosomal subunit protein uS13.